A 970-amino-acid chain; its full sequence is Protein tweety (970 aa).

Residues 1–47 lie on the Extracellular side of the membrane; it reads MGDYHEFTDQYKVPVIAKLLHALPHYNITFHKINSTFRPNDEIYLES. Residues Asn-27 and Asn-34 are each glycosylated (N-linked (GlcNAc...) asparagine). The helical transmembrane segment at 48 to 68 threads the bilayer; that stretch reads LGILGSVPAALLIVSLLGLLF. The Cytoplasmic portion of the chain corresponds to 69 to 89; the sequence is YLMTRCCDRKPRPAHSITSLK. A helical transmembrane segment spans residues 90-110; that stretch reads VALSIVTVMCCAAIGLGLYGN. The Extracellular portion of the chain corresponds to 111 to 219; that stretch reads DDLHNGLLEV…GDQWELIRWP (109 aa). 3 N-linked (GlcNAc...) asparagine glycosylation sites follow: Asn-136, Asn-166, and Asn-183. The helical transmembrane segment at 220–240 threads the bilayer; the sequence is GTVATLALLLVLCAVLLVGVA. The Cytoplasmic segment spans residues 241–246; the sequence is RHSRCA. Residues 247-267 form a helical membrane-spanning segment; it reads LILFSVCGLLAVTGSWLMSGL. The Extracellular segment spans residues 268-395; it reads YLSSSVAVGD…RGLCEGGLLG (128 aa). Asn-359 carries an N-linked (GlcNAc...) asparagine glycan. A helical transmembrane segment spans residues 396-416; it reads LVLMLIASFIAAILLTIMVWV. Over 417 to 970 the chain is Cytoplasmic; it reads DSHTWIYIRK…DESNYAVTEL (554 aa). The span at 532-571 shows a compositional bias: low complexity; that stretch reads NAAANMPPTTQAAQQQQQQQAQQQQQQAQQQLGGPQPIYC. 3 disordered regions span residues 532–587, 677–763, and 849–970; these read NAAA…QHPH, RQNS…NESD, and MKAI…VTEL. Over residues 572–587 the composition is skewed to basic residues; sequence HHPHQHPHPHPHQHPH. Low complexity-rich tracts occupy residues 689–700, 707–737, and 745–759; these read HQHPPSLHQQQQ, QQQQ…QQHH, and QHQQ…QQQP. Residues 852–868 are compositionally biased toward pro residues; the sequence is IPPPRIGTPTSPPPPVA. Gly residues-rich tracts occupy residues 883 to 894 and 931 to 945; these read QNGGAVVGGGGA and NGGG…GGGA. Polar residues predominate over residues 961 to 970; that stretch reads DESNYAVTEL.

The protein belongs to the tweety family.

It localises to the cell membrane. Functionally, non-essential protein that probably acts as a chloride channel. The polypeptide is Protein tweety (tty) (Drosophila melanogaster (Fruit fly)).